Reading from the N-terminus, the 328-residue chain is Biotin synthase (328 aa).

The 230-residue stretch at Phe48–Arg277 folds into the Radical SAM core domain. Residues Cys66, Cys70, and Cys73 each coordinate [4Fe-4S] cluster. Ser142 and Cys202 together coordinate [2Fe-2S] cluster.

Belongs to the radical SAM superfamily. Biotin synthase family. As to quaternary structure, homodimer. It depends on [4Fe-4S] cluster as a cofactor. [2Fe-2S] cluster serves as cofactor.

It carries out the reaction (4R,5S)-dethiobiotin + (sulfur carrier)-SH + 2 reduced [2Fe-2S]-[ferredoxin] + 2 S-adenosyl-L-methionine = (sulfur carrier)-H + biotin + 2 5'-deoxyadenosine + 2 L-methionine + 2 oxidized [2Fe-2S]-[ferredoxin]. The protein operates within cofactor biosynthesis; biotin biosynthesis; biotin from 7,8-diaminononanoate: step 2/2. Catalyzes the conversion of dethiobiotin (DTB) to biotin by the insertion of a sulfur atom into dethiobiotin via a radical-based mechanism. The polypeptide is Biotin synthase (Citrifermentans bemidjiense (strain ATCC BAA-1014 / DSM 16622 / JCM 12645 / Bem) (Geobacter bemidjiensis)).